Reading from the N-terminus, the 467-residue chain is Acyl-lipid (8-3)-desaturase B (467 aa).

Positions 12 to 89 constitute a Cytochrome b5 heme-binding domain; it reads LKLYTWDEVS…IKQYEIGYIS (78 aa). Heme-binding residues include histidine 47 and histidine 70. 2 helical membrane passes run 123–143 and 152–172; these read VSVGVFTRMVLIYLFLFVTYY and FWLNCIFAVLYGVANSLFGLH. The Histidine box-1 motif lies at 175–179; the sequence is HDACH. Residues 187-207 form a helical membrane-spanning segment; sequence MTWKILGATFDLFAGASFYAW. The Histidine box-2 signature appears at 211 to 216; sequence HVIGHH. Transmembrane regions (helical) follow at residues 293 to 313 and 317 to 337; these read AIFILGKLVFIISRFILPLIY and FSHLICFFLISELVLGWYLAI. The Histidine box-3 signature appears at 400–404; that stretch reads QVIHH.

This sequence belongs to the fatty acid desaturase type 1 family. Fe(2+) is required as a cofactor.

The protein localises to the membrane. It catalyses the reaction an (8Z,11Z,14Z)-icosatrienoyl-containing glycerolipid + 2 Fe(II)-[cytochrome b5] + O2 + 2 H(+) = (5Z,8Z,11Z,14Z)-eicosatetraenoyl-containing glycerolipid + 2 Fe(III)-[cytochrome b5] + 2 H2O. The catalysed reaction is an (8Z,11Z,14Z,17Z)-eicosatetraenoyl-containing glycerolipid + 2 Fe(II)-[cytochrome b5] + O2 + 2 H(+) = a (5Z,8Z,11Z,14Z,17Z)-eicosapentaenoyl-containing glycerolipid + 2 Fe(III)-[cytochrome b5] + 2 H2O. Fatty acid desaturase that introduces a cis double bond at the 5-position in 18-carbon polyunsaturated fatty acids. The chain is Acyl-lipid (8-3)-desaturase B (fadB) from Dictyostelium discoideum (Social amoeba).